The chain runs to 770 residues: Cullin-1 (770 aa).

A Cullin neddylation domain is found at 700–761 (DRKLQIQAAI…EKEYLMRVEG (62 aa)). A Glycyl lysine isopeptide (Lys-Gly) (interchain with G-Cter in NEDD8) cross-link involves residue lysine 714.

The protein belongs to the cullin family. As to quaternary structure, part of a complex that includes culA, fbxA and regA. Formation of this complex is dependent on the MAP kinase erkB. Post-translationally, neddylated; which enhances the ubiquitination activity of SCF.

Its pathway is protein modification; protein ubiquitination. Probable core component of cullin-based SCF-like E3 ubiquitin-protein ligase complexes which mediate the ubiquitination and subsequent proteasomal degradation of target proteins. The E3 ubiquitin-protein ligase activity of the complex is dependent on the neddylation of the cullin subunit. Required at several stages during development. CulA and fbxA regulate multicellular development by targeting regA for degradation via a pathway that requires erkB function, leading to an increase in cAMP and PKA activity. The chain is Cullin-1 (culA) from Dictyostelium discoideum (Social amoeba).